We begin with the raw amino-acid sequence, 317 residues long: Putative 2-hydroxyacid dehydrogenase SE_1879 (317 aa).

NAD(+) is bound by residues 155 to 156 (EI), 234 to 236 (AGR), and aspartate 260. The active site involves arginine 236. Glutamate 265 is a catalytic residue. Catalysis depends on histidine 283, which acts as the Proton donor. An NAD(+)-binding site is contributed by 283–286 (HIGN).

It belongs to the D-isomer specific 2-hydroxyacid dehydrogenase family.

In Staphylococcus epidermidis (strain ATCC 12228 / FDA PCI 1200), this protein is Putative 2-hydroxyacid dehydrogenase SE_1879.